Here is a 221-residue protein sequence, read N- to C-terminus: Epididymal secretory glutathione peroxidase (221 aa).

Positions 1-21 (MTTQLRVVHLLPLLLACFVQT) are cleaved as a signal peptide. Residue C73 is part of the active site.

The protein belongs to the glutathione peroxidase family. As to expression, epididymis.

The protein localises to the secreted. It carries out the reaction 2 glutathione + H2O2 = glutathione disulfide + 2 H2O. Its function is as follows. Protects cells and enzymes from oxidative damage, by catalyzing the reduction of hydrogen peroxide, lipid peroxides and organic hydroperoxide, by glutathione. May constitute a glutathione peroxidase-like protective system against peroxide damage in sperm membrane lipids. The protein is Epididymal secretory glutathione peroxidase (GPX5) of Macaca fascicularis (Crab-eating macaque).